Consider the following 231-residue polypeptide: Probable septum site-determining protein MinC (231 aa).

Residues 102-125 (KEKAPRPAPAPQAPTQNTTPVTKT) are disordered. The segment covering 114–123 (APTQNTTPVT) has biased composition (low complexity).

The protein belongs to the MinC family. In terms of assembly, interacts with MinD and FtsZ.

Functionally, cell division inhibitor that blocks the formation of polar Z ring septums. Rapidly oscillates between the poles of the cell to destabilize FtsZ filaments that have formed before they mature into polar Z rings. Prevents FtsZ polymerization. The polypeptide is Probable septum site-determining protein MinC (Escherichia coli O45:K1 (strain S88 / ExPEC)).